Here is a 355-residue protein sequence, read N- to C-terminus: Methylxanthine N3-demethylase NdmB (355 aa).

A Rieske domain is found at 19 to 131; the sequence is WHPVCTLNEF…CEVKYDIVWV (113 aa). [2Fe-2S] cluster-binding residues include Cys64, His66, Cys87, and His90.

Requires [2Fe-2S] cluster as cofactor.

The catalysed reaction is theobromine + NADH + O2 + H(+) = 7-methylxanthine + formaldehyde + NAD(+) + H2O. The enzyme catalyses theobromine + NADPH + O2 + H(+) = 7-methylxanthine + formaldehyde + NADP(+) + H2O. It catalyses the reaction 3-methylxanthine + NADH + O2 + H(+) = xanthine + formaldehyde + NAD(+) + H2O. It carries out the reaction 3-methylxanthine + NADPH + O2 + H(+) = xanthine + formaldehyde + NADP(+) + H2O. Its function is as follows. Involved in the caffeine degradation, which is the essential first step for assimilating the carbon and nitrogen in caffeine. Catalyzes the N3-demethylation of theobromine to produce 7-methylxanthine and formaldehyde. Also catalyzes the N3-demethylation of 3-methylxanthine, caffeine, and theophylline to xanthine, paraxanthine, and 1-methylxanthine, respectively. NADH is the preferred substrate. In Pseudomonas putida (Arthrobacter siderocapsulatus), this protein is Methylxanthine N3-demethylase NdmB (ndmB).